Here is a 293-residue protein sequence, read N- to C-terminus: Proline iminopeptidase (293 aa).

Residues 28–277 form the AB hydrolase-1 domain; the sequence is PLVLLHGGPG…NCSHMSFVQK (250 aa). Residue Ser-105 is the Nucleophile of the active site. Asp-244 is an active-site residue. His-271 (proton donor) is an active-site residue.

Belongs to the peptidase S33 family.

Its subcellular location is the cell envelope. The catalysed reaction is Release of N-terminal proline from a peptide.. In terms of biological role, releases the N-terminal proline from various substrates. The sequence is that of Proline iminopeptidase from Lactobacillus acidophilus (strain ATCC 700396 / NCK56 / N2 / NCFM).